The sequence spans 239 residues: RNA polymerase sigma factor FliA (239 aa).

Positions 16–88 (LWQRYVPLVR…MLDELRSRDW (73 aa)) are sigma-70 factor domain-2. The Interaction with polymerase core subunit RpoC motif lies at 43–46 (DLLQ). The interval 96 to 166 (NAREVAQAMG…IELVTEEHQQ (71 aa)) is sigma-70 factor domain-3. Residues 185 to 233 (AIESLPEREQLVLTLYYQEELNLKEIGAVLEVGESRVSQLHSQAIKRLR) form a sigma-70 factor domain-4 region. The segment at residues 207–226 (LKEIGAVLEVGESRVSQLHS) is a DNA-binding region (H-T-H motif).

Belongs to the sigma-70 factor family. FliA subfamily.

It localises to the cytoplasm. Its function is as follows. Sigma factors are initiation factors that promote the attachment of RNA polymerase to specific initiation sites and are then released. This sigma factor controls the expression of flagella-related genes. This is RNA polymerase sigma factor FliA from Salmonella typhi.